The primary structure comprises 307 residues: MEFVFLGTGAGVPSKGRNVSAIALQLLEERGQTWLFDCGEATQHQILHTSVRPRRIEKIFITHLHGDHIFGLPGLLGSRSFQGGTTPLTVYGPKGIKQFIEVALSVSTTHVKYPLEIVEITEEGTVFEDNEFHVETKRLSHGIECFGYRIIEKDIQGALLVDKLLEMGVKPGPLFKRLKDGEVVELENGTILNGQDFIGPPQKGRIITILGDTRFCEASRELAQDADVLVHEATFAAEDEQQAYDYFHSTSKQAASIALQANAKRLILTHISSRYQGDTYKELLKEARELFSNTEIATDLKSFPVER.

Zn(2+) contacts are provided by histidine 63, histidine 65, aspartate 67, histidine 68, histidine 141, aspartate 212, and histidine 270. Aspartate 67 functions as the Proton acceptor in the catalytic mechanism.

The protein belongs to the RNase Z family. In terms of assembly, homodimer. The cofactor is Zn(2+).

The enzyme catalyses Endonucleolytic cleavage of RNA, removing extra 3' nucleotides from tRNA precursor, generating 3' termini of tRNAs. A 3'-hydroxy group is left at the tRNA terminus and a 5'-phosphoryl group is left at the trailer molecule.. In terms of biological role, zinc phosphodiesterase, which displays some tRNA 3'-processing endonuclease activity. Probably involved in tRNA maturation, by removing a 3'-trailer from precursor tRNA. The sequence is that of Ribonuclease Z from Bacillus cereus (strain ATCC 10987 / NRS 248).